Here is a 196-residue protein sequence, read N- to C-terminus: Segregation and condensation protein B (196 aa).

This sequence belongs to the ScpB family. In terms of assembly, homodimer. Homodimerization may be required to stabilize the binding of ScpA to the Smc head domains. Component of a cohesin-like complex composed of ScpA, ScpB and the Smc homodimer, in which ScpA and ScpB bind to the head domain of Smc. The presence of the three proteins is required for the association of the complex with DNA.

The protein resides in the cytoplasm. In terms of biological role, participates in chromosomal partition during cell division. May act via the formation of a condensin-like complex containing Smc and ScpA that pull DNA away from mid-cell into both cell halves. This is Segregation and condensation protein B from Pediococcus pentosaceus (strain ATCC 25745 / CCUG 21536 / LMG 10740 / 183-1w).